The sequence spans 253 residues: MNIYDILDKVFTMMYDGQDLTDYFLVQEVRGRSVYSIEMGKRTIAGVDGGVITTESLPARELEVDAIVFGDGTETDLRRRIEYLNFLLHRDTDVPITFSDEPSRTYYGRYEFATEGDEKGGFHKVTLNFYCQDPLKYGPEVTTDVTTASTPVKNTGLAVTNPTIRCVFSTSATEYEMQLLDGSTVVKFLKVKYGFNTGDTLVIDCHERSVTLNGQDIMPALLIQSDWIQLKPQVNTYLKATQPSTIVFTEKFL.

Homohexamer.

Its subcellular location is the virion. Its function is as follows. Forms a 40 Angstroms wide channel at the distal tip of the tail. Remains associated to the tail after DNA ejection. The sequence is that of Distal tail protein from Bacillus phage SPP1 (Bacteriophage SPP1).